We begin with the raw amino-acid sequence, 25 residues long: Large ribosomal subunit protein uL30 (25 aa).

Belongs to the universal ribosomal protein uL30 family. As to quaternary structure, part of the 50S ribosomal subunit.

This chain is Large ribosomal subunit protein uL30 (rpmD), found in Pseudomonas putida (Arthrobacter siderocapsulatus).